We begin with the raw amino-acid sequence, 34 residues long: Non-cysteinic peptide Bs 10 (34 aa).

Positions 1–34 (VTMGYIKDGDGKKIAKKKNKNGRKHVEIDLNKVG) are disordered. Over residues 14–23 (IAKKKNKNGR) the composition is skewed to basic residues. A compositionally biased stretch (basic and acidic residues) spans 24-34 (KHVEIDLNKVG).

As to expression, expressed by the venom gland.

It localises to the secreted. This chain is Non-cysteinic peptide Bs 10, found in Hottentotta tamulus sindicus (Scorpion).